A 219-amino-acid polypeptide reads, in one-letter code: MNVDGPFTASCPVVLASGSPRRQEFLRAMGVPFSVDTAGASEPEPVEGEAAVAYARRAACAKTLPVARRHAAACVIGADTVVALDGVIMGKPAGHAHALSMLRALAGARHEVVSACCICLPGNAQEPVVLHAVTSVWMHRWDDAALKAYIATGEPADKAGAYGIQGIGAFLVSRIDGSWSNVVGLPLTELLTELQRRGVVVPSGAQTAEQDGHAPDVRD.

Asp-79 (proton acceptor) is an active-site residue.

The protein belongs to the Maf family. YhdE subfamily. The cofactor is a divalent metal cation.

The protein localises to the cytoplasm. The enzyme catalyses dTTP + H2O = dTMP + diphosphate + H(+). The catalysed reaction is UTP + H2O = UMP + diphosphate + H(+). Its function is as follows. Nucleoside triphosphate pyrophosphatase that hydrolyzes dTTP and UTP. May have a dual role in cell division arrest and in preventing the incorporation of modified nucleotides into cellular nucleic acids. The sequence is that of dTTP/UTP pyrophosphatase from Oleidesulfovibrio alaskensis (strain ATCC BAA-1058 / DSM 17464 / G20) (Desulfovibrio alaskensis).